A 262-amino-acid chain; its full sequence is Global transcriptional regulator CodY (262 aa).

The tract at residues 1 to 159 is GAF domain; sequence MATLLEKTRK…ATTVIGVQLS (159 aa). Residues 207 to 226 constitute a DNA-binding region (H-T-H motif); that stretch reads ASVIADKIGITRSVIVNALR.

This sequence belongs to the CodY family.

It is found in the cytoplasm. DNA-binding global transcriptional regulator which is involved in the adaptive response to starvation and acts by directly or indirectly controlling the expression of numerous genes in response to nutrient availability. During rapid exponential growth, CodY is highly active and represses genes whose products allow adaptation to nutrient depletion. The polypeptide is Global transcriptional regulator CodY (Lactococcus lactis subsp. lactis (strain IL1403) (Streptococcus lactis)).